Reading from the N-terminus, the 198-residue chain is Ribonuclease HII (198 aa).

One can recognise an RNase H type-2 domain in the interval 2 to 192 (MYYCGIDEAG…IKKIIDNQKN (191 aa)). D8, E9, and D101 together coordinate a divalent metal cation.

It belongs to the RNase HII family. The cofactor is Mn(2+). Requires Mg(2+) as cofactor.

The protein localises to the cytoplasm. It catalyses the reaction Endonucleolytic cleavage to 5'-phosphomonoester.. Endonuclease that specifically degrades the RNA of RNA-DNA hybrids. This Natranaerobius thermophilus (strain ATCC BAA-1301 / DSM 18059 / JW/NM-WN-LF) protein is Ribonuclease HII.